The chain runs to 273 residues: Undecaprenyl-diphosphatase (273 aa).

8 helical membrane passes run 3–23, 48–68, 92–112, 116–136, 152–172, 193–213, 220–240, and 252–272; these read IVEI…EFAP, AANT…VVVF, MQVI…EDYI, LFST…MIAA, ITYK…WPGF, ADFT…LSLL, TIDA…FALI, and IRLV…YIVY.

This sequence belongs to the UppP family.

The protein localises to the cell membrane. It carries out the reaction di-trans,octa-cis-undecaprenyl diphosphate + H2O = di-trans,octa-cis-undecaprenyl phosphate + phosphate + H(+). Catalyzes the dephosphorylation of undecaprenyl diphosphate (UPP). Confers resistance to bacitracin. The polypeptide is Undecaprenyl-diphosphatase (Geobacillus sp. (strain WCH70)).